The chain runs to 267 residues: 2-keto-3-deoxy-L-rhamnonate aldolase (267 aa).

His-49 acts as the Proton acceptor in catalysis. Residue Gln-151 participates in substrate binding. Glu-153 contacts Mg(2+). Positions 178 and 179 each coordinate substrate. Mg(2+) is bound at residue Asp-179.

It belongs to the HpcH/HpaI aldolase family. KDR aldolase subfamily. Homohexamer. Mg(2+) serves as cofactor.

It carries out the reaction 2-dehydro-3-deoxy-L-rhamnonate = (S)-lactaldehyde + pyruvate. Its function is as follows. Catalyzes the reversible retro-aldol cleavage of 2-keto-3-deoxy-L-rhamnonate (KDR) to pyruvate and lactaldehyde. This Salmonella paratyphi A (strain ATCC 9150 / SARB42) protein is 2-keto-3-deoxy-L-rhamnonate aldolase.